The following is a 1072-amino-acid chain: DNA-directed RNA polymerase subunit beta (1072 aa).

The protein belongs to the RNA polymerase beta chain family. In terms of assembly, in plastids the minimal PEP RNA polymerase catalytic core is composed of four subunits: alpha, beta, beta', and beta''. When a (nuclear-encoded) sigma factor is associated with the core the holoenzyme is formed, which can initiate transcription.

The protein localises to the plastid. It is found in the chloroplast. The enzyme catalyses RNA(n) + a ribonucleoside 5'-triphosphate = RNA(n+1) + diphosphate. Functionally, DNA-dependent RNA polymerase catalyzes the transcription of DNA into RNA using the four ribonucleoside triphosphates as substrates. The protein is DNA-directed RNA polymerase subunit beta of Olimarabidopsis pumila (Dwarf rocket).